Here is a 421-residue protein sequence, read N- to C-terminus: Esterase LipQ (421 aa).

Residues Ser-249, Asp-344, and His-377 contribute to the active site.

It belongs to the 'GDXG' lipolytic enzyme family.

It catalyses the reaction hexadecanoate ester + H2O = an aliphatic alcohol + hexadecanoate + H(+). In terms of biological role, shows lipase activity. Is highly immunogenic and may play an important role in the virulence and pathogenesis of M.tuberculosis infection, by altering the balance of cytokines. Significantly down-regulates the expression level of pro-inflammatory cytokines (TNF-alpha and IFN-gamma) and up-regulates the level of anti-inflammatory cytokines such as IL-4 and IL-10 as compared to LPS stimulated macrophages. Also inhibits the expression of iNOS, TLR2 and transcription factor NF-kappa-B in LPS stimulated macrophages whereas the expression of TLR-4 remains unchanged. This Mycobacterium tuberculosis (strain ATCC 25618 / H37Rv) protein is Esterase LipQ.